A 246-amino-acid chain; its full sequence is Orotidine 5'-phosphate decarboxylase (246 aa).

Substrate-binding positions include Asp22, Lys44, 71 to 80, Thr130, Arg191, Gln201, Gly221, and Arg222; that span reads DLKYHDIPHT. Lys73 functions as the Proton donor in the catalytic mechanism.

The protein belongs to the OMP decarboxylase family. Type 1 subfamily. In terms of assembly, homodimer.

The catalysed reaction is orotidine 5'-phosphate + H(+) = UMP + CO2. Its pathway is pyrimidine metabolism; UMP biosynthesis via de novo pathway; UMP from orotate: step 2/2. Catalyzes the decarboxylation of orotidine 5'-monophosphate (OMP) to uridine 5'-monophosphate (UMP). The sequence is that of Orotidine 5'-phosphate decarboxylase from Neisseria meningitidis serogroup C (strain 053442).